The following is a 479-amino-acid chain: Poly(A) polymerase catalytic subunit (479 aa).

Catalysis depends on residues D202 and D204. Ca(2+) contacts are provided by D202, D204, and D253.

It belongs to the poxviridae poly(A) polymerase catalytic subunit family. In terms of assembly, heterodimer of a large (catalytic) subunit and a small (regulatory) subunit.

It carries out the reaction RNA(n) + ATP = RNA(n)-3'-adenine ribonucleotide + diphosphate. Polymerase that creates the 3'-poly(A) tail of mRNA's. The polypeptide is Poly(A) polymerase catalytic subunit (OPG063) (Cowpox virus (strain GRI-90 / Grishak) (CPV)).